Consider the following 301-residue polypeptide: MDIRDEILKLKKEKGAIILAHYYQIPEIQEIADYVGDSYYLSKIAKDCEENIIVFCGVKFMAESAKILSPEKTVILPVMEAGCVMADMATEEGLAKLKEEHPNAKVVCYINSSTEVKALSDVCCTSSNAENIINNLEEKEIIFLPDRNLGSYIQEKTPDKKFILWNGFCIVHEAIQKEEILRLKSEHEGILTVAHPECSKEIRDISDFIGSTSEIINFVNNSSNKKFIIITEEGVLHQLRKNGEEKEFYIPYGKMVCRNMKMTTLKDLYESLLKMENKIEIDEDLRLKAYNSLKNMHKLGG.

Iminosuccinate contacts are provided by His21 and Ser38. Cys83 serves as a coordination point for [4Fe-4S] cluster. Iminosuccinate-binding positions include 109-111 (YIN) and Ser126. Position 169 (Cys169) interacts with [4Fe-4S] cluster. Iminosuccinate-binding positions include 195-197 (HPE) and Thr212. Cys257 is a binding site for [4Fe-4S] cluster.

Belongs to the quinolinate synthase family. Type 2 subfamily. Requires [4Fe-4S] cluster as cofactor.

The protein localises to the cytoplasm. The enzyme catalyses iminosuccinate + dihydroxyacetone phosphate = quinolinate + phosphate + 2 H2O + H(+). It functions in the pathway cofactor biosynthesis; NAD(+) biosynthesis; quinolinate from iminoaspartate: step 1/1. In terms of biological role, catalyzes the condensation of iminoaspartate with dihydroxyacetone phosphate to form quinolinate. The polypeptide is Quinolinate synthase (Clostridium perfringens (strain 13 / Type A)).